A 397-amino-acid polypeptide reads, in one-letter code: Growth-regulating factor 5 (397 aa).

The QLQ domain maps to 16–51 (PFTPTQWEELEHQALIYKYMVSGVPVPPELIFSIRR). 2 consecutive short sequence motifs (bipartite nuclear localization signal) follow at residues 78–96 (RKPD…KKWR) and 114–121 (RGRNRARK). A WRC domain is found at 81-125 (DPEPGRCRRTDGKKWRCSREAYPDSKYCEKHMHRGRNRARKSLDQ). Disordered regions lie at residues 108–172 (CEKH…SMDA), 197–217 (LDYP…HHAS), 288–320 (PYHH…DHDH), and 340–397 (VLAN…DTGS). Positions 111 to 120 (HMHRGRNRAR) are enriched in basic residues. A compositionally biased stretch (low complexity) spans 128–172 (TTTTPLTSPSLSFTNNNNPSPTLSSSSSSNSSSTTYSASSSSMDA). Residues 288 to 298 (PYHHCSTDHNK) are compositionally biased toward basic and acidic residues.

This sequence belongs to the GRF family. As to quaternary structure, interacts with GIF1. In terms of tissue distribution, strongly expressed in actively growing and developing tissues, such as roots, upper stems, and shoot tips containing the shoot apical meristem (SAM) and flower buds. Also expressed in mature flowers, but weakly expressed in mature stems and leaves.

Its subcellular location is the nucleus. Its function is as follows. Transcription activator that plays a role in the regulation of cell expansion in leaf and cotyledons tissues. Acts together with GIF1 for the development of appropriate leaf size and shape through the promotion and/or maintenance of cell proliferation activity in leaf primordia. This chain is Growth-regulating factor 5 (GRF5), found in Arabidopsis thaliana (Mouse-ear cress).